Consider the following 243-residue polypeptide: Uridylate kinase (243 aa).

ATP is bound at residue 15–18 (KMSG). Glycine 57 contacts UMP. Glycine 58 and arginine 62 together coordinate ATP. UMP contacts are provided by residues aspartate 77 and 138 to 145 (TGNPLVTT). ATP-binding residues include threonine 165, asparagine 166, tyrosine 171, and aspartate 174.

Belongs to the UMP kinase family. In terms of assembly, homohexamer.

Its subcellular location is the cytoplasm. The catalysed reaction is UMP + ATP = UDP + ADP. The protein operates within pyrimidine metabolism; CTP biosynthesis via de novo pathway; UDP from UMP (UMPK route): step 1/1. With respect to regulation, inhibited by UTP. In terms of biological role, catalyzes the reversible phosphorylation of UMP to UDP. The sequence is that of Uridylate kinase from Coxiella burnetii (strain RSA 493 / Nine Mile phase I).